We begin with the raw amino-acid sequence, 286 residues long: Formamidopyrimidine-DNA glycosylase (286 aa).

P2 (schiff-base intermediate with DNA) is an active-site residue. E3 serves as the catalytic Proton donor. K61 (proton donor; for beta-elimination activity) is an active-site residue. The DNA site is built by H96, R117, and K160. The segment at 246-280 (DAYGREGLPCRRCATPMRRRPWMNRSSYFCPKCQR) adopts an FPG-type zinc-finger fold. The active-site Proton donor; for delta-elimination activity is the R270.

The protein belongs to the FPG family. As to quaternary structure, monomer. It depends on Zn(2+) as a cofactor.

It carries out the reaction Hydrolysis of DNA containing ring-opened 7-methylguanine residues, releasing 2,6-diamino-4-hydroxy-5-(N-methyl)formamidopyrimidine.. It catalyses the reaction 2'-deoxyribonucleotide-(2'-deoxyribose 5'-phosphate)-2'-deoxyribonucleotide-DNA = a 3'-end 2'-deoxyribonucleotide-(2,3-dehydro-2,3-deoxyribose 5'-phosphate)-DNA + a 5'-end 5'-phospho-2'-deoxyribonucleoside-DNA + H(+). Its function is as follows. Involved in base excision repair of DNA damaged by oxidation or by mutagenic agents. Acts as a DNA glycosylase that recognizes and removes damaged bases. Has a preference for oxidized purines, such as 7,8-dihydro-8-oxoguanine (8-oxoG). Has AP (apurinic/apyrimidinic) lyase activity and introduces nicks in the DNA strand. Cleaves the DNA backbone by beta-delta elimination to generate a single-strand break at the site of the removed base with both 3'- and 5'-phosphates. The chain is Formamidopyrimidine-DNA glycosylase from Streptomyces avermitilis (strain ATCC 31267 / DSM 46492 / JCM 5070 / NBRC 14893 / NCIMB 12804 / NRRL 8165 / MA-4680).